We begin with the raw amino-acid sequence, 600 residues long: Glutamine--fructose-6-phosphate aminotransferase [isomerizing] (600 aa).

Catalysis depends on Cys-2, which acts as the Nucleophile; for GATase activity. Residues 2–217 form the Glutamine amidotransferase type-2 domain; sequence CGIVGYIGNE…DEELVIVRRD (216 aa). 2 SIS domains span residues 283–422 and 452–590; these read IRAA…AAGK and IARD…VDKP. Catalysis depends on Lys-595, which acts as the For Fru-6P isomerization activity.

Homodimer.

The protein resides in the cytoplasm. The catalysed reaction is D-fructose 6-phosphate + L-glutamine = D-glucosamine 6-phosphate + L-glutamate. Functionally, catalyzes the first step in hexosamine metabolism, converting fructose-6P into glucosamine-6P using glutamine as a nitrogen source. The polypeptide is Glutamine--fructose-6-phosphate aminotransferase [isomerizing] (Shouchella clausii (strain KSM-K16) (Alkalihalobacillus clausii)).